Reading from the N-terminus, the 220-residue chain is Type-4 uracil-DNA glycosylase (220 aa).

[4Fe-4S] cluster is bound by residues Cys-14 and Cys-17. Uracil contacts are provided by residues 41-43 (GEA), Phe-55, and Asn-82. [4Fe-4S] cluster-binding residues include Cys-86 and Cys-102. His-164 contributes to the uracil binding site.

This sequence belongs to the uracil-DNA glycosylase (UDG) superfamily. Type 4 (UDGa) family.

It carries out the reaction Hydrolyzes single-stranded DNA or mismatched double-stranded DNA and polynucleotides, releasing free uracil.. Its function is as follows. Removes uracil bases that are present in DNA as a result of either deamination of cytosine or misincorporation of dUMP instead of dTMP. This is Type-4 uracil-DNA glycosylase from Sulfurisphaera tokodaii (strain DSM 16993 / JCM 10545 / NBRC 100140 / 7) (Sulfolobus tokodaii).